Consider the following 431-residue polypeptide: Metal-binding activator 1 (431 aa).

Residues 1 to 40 (MILIDDIKYACMECVRGHRSSSCKHHERPLLQVRSKGRPG) constitute a DNA-binding region (copper-fist). Zn(2+) is bound by residues C11, C14, C23, and H25.

It is found in the nucleus. Functionally, copper ion-sensing transcription factor which activates transcription of the CTR1 copper transporter under low-copper conditions. Promotes filamentous and invasive growth. This is Metal-binding activator 1 (MAC1) from Candida albicans (strain SC5314 / ATCC MYA-2876) (Yeast).